A 392-amino-acid chain; its full sequence is MIWIMTMARRMNGVYAAFMLVAFMMGVAGALQAPTLSLFLSREVGAQPFWIGLFYTVNAIAGIGVSLWLAKRSDSQGDRRKLIIFCCLMAIGNALLFAFNRHYLTLITCGVLLASLANTAMPQLFALAREYADNSAREVVMFSSVMRAQLSLAWVIGPPLAFMLALNYGFTVMFSIAAGIFTLSLVLIAFMLPSVARVELPSENALSMQGGWQDSNVRMLFVASTLMWTCNTMYIIDMPLWISSELGLPDKLAGFLMGTAAGLEIPAMILAGYYVKRYGKRRMMVIAVAAGVLFYTGLIFFNSRMALMTLQLFNAVFIGIVAGIGMLWFQDLMPGRAGAATTLFTNSISTGVILAGVIQGAIAQSWGHFAVYWVIAVISVVALFLTAKVKDV.

At 1–10 (MIWIMTMARR) the chain is on the cytoplasmic side. Residues 11–31 (MNGVYAAFMLVAFMMGVAGAL) form a helical membrane-spanning segment. Residues 32–48 (QAPTLSLFLSREVGAQP) are Periplasmic-facing. A helical transmembrane segment spans residues 49–69 (FWIGLFYTVNAIAGIGVSLWL). The Cytoplasmic segment spans residues 70–81 (AKRSDSQGDRRK). The chain crosses the membrane as a helical span at residues 82 to 102 (LIIFCCLMAIGNALLFAFNRH). At 103-106 (YLTL) the chain is on the periplasmic side. A helical membrane pass occupies residues 107 to 127 (ITCGVLLASLANTAMPQLFAL). Topologically, residues 128-149 (AREYADNSAREVVMFSSVMRAQ) are cytoplasmic. Residues 150 to 170 (LSLAWVIGPPLAFMLALNYGF) traverse the membrane as a helical segment. Residue threonine 171 is a topological domain, periplasmic. A helical membrane pass occupies residues 172 to 192 (VMFSIAAGIFTLSLVLIAFML). At 193–219 (PSVARVELPSENALSMQGGWQDSNVRM) the chain is on the cytoplasmic side. Residues 220 to 240 (LFVASTLMWTCNTMYIIDMPL) traverse the membrane as a helical segment. The Periplasmic portion of the chain corresponds to 241–251 (WISSELGLPDK). Residues 252–272 (LAGFLMGTAAGLEIPAMILAG) form a helical membrane-spanning segment. At 273 to 282 (YYVKRYGKRR) the chain is on the cytoplasmic side. Residues 283-303 (MMVIAVAAGVLFYTGLIFFNS) form a helical membrane-spanning segment. Residues 304–308 (RMALM) lie on the Periplasmic side of the membrane. Residues 309 to 329 (TLQLFNAVFIGIVAGIGMLWF) form a helical membrane-spanning segment. Residues 330–342 (QDLMPGRAGAATT) are Cytoplasmic-facing. A helical membrane pass occupies residues 343 to 363 (LFTNSISTGVILAGVIQGAIA). The Periplasmic segment spans residues 364–365 (QS). A helical transmembrane segment spans residues 366-386 (WGHFAVYWVIAVISVVALFLT). The Cytoplasmic portion of the chain corresponds to 387-392 (AKVKDV).

It belongs to the major facilitator superfamily. Set transporter family.

Its subcellular location is the cell inner membrane. Its function is as follows. Involved in the efflux of sugars. The physiological role may be the detoxification of non-metabolizable sugar analogs. Can transport IPTG, lactose and glucose. Has broad substrate specificity, with preferences for glucosides or galactosides with alkyl or aryl substituents. This Escherichia coli (strain K12) protein is Sugar efflux transporter A (setA).